Consider the following 259-residue polypeptide: Dysbindin domain-containing protein 2 (259 aa).

Disordered regions lie at residues 27 to 56 (SCERVSPPPPLPHFRLPPLPRSRLPGPVSR) and 174 to 259 (ADVF…GACS). Over residues 32-46 (SPPPPLPHFRLPPLP) the composition is skewed to pro residues. The segment covering 205 to 223 (TSDRTTSRTSSSSSSDSST) has biased composition (low complexity). 2 positions are modified to phosphoserine: S217 and S218. At T237 the chain carries Phosphothreonine. Position 242 is a phosphoserine (S242).

The protein belongs to the dysbindin family. Monomer. Interacts with CSNK1D and CSNK1E. As to expression, detected in brain.

May modulate the activity of casein kinase-1. Inhibits CSNK1D autophosphorylation (in vitro). The sequence is that of Dysbindin domain-containing protein 2 (DBNDD2) from Homo sapiens (Human).